The primary structure comprises 252 residues: Flap endonuclease Xni (252 aa).

Aspartate 105 provides a ligand contact to Mg(2+). A 5'-3' exonuclease domain is found at 162 to 250 (ERTQFIDYLA…LNANLSQFRL (89 aa)). The K(+) site is built by leucine 172, alanine 173, proline 181, valine 183, and isoleucine 186. The tract at residues 185–190 (GIGPKS) is interaction with DNA.

This sequence belongs to the Xni family. The cofactor is Mg(2+). K(+) is required as a cofactor.

Has flap endonuclease activity. During DNA replication, flap endonucleases cleave the 5'-overhanging flap structure that is generated by displacement synthesis when DNA polymerase encounters the 5'-end of a downstream Okazaki fragment. In Shewanella woodyi (strain ATCC 51908 / MS32), this protein is Flap endonuclease Xni.